The following is an 88-amino-acid chain: Small ribosomal subunit protein bS20 (88 aa).

The tract at residues 1–25 (MANSAQARKRARQATKARAHNASLR) is disordered. A compositionally biased stretch (basic residues) spans 7–19 (ARKRARQATKARA).

Belongs to the bacterial ribosomal protein bS20 family.

Binds directly to 16S ribosomal RNA. The sequence is that of Small ribosomal subunit protein bS20 from Azoarcus sp. (strain BH72).